The primary structure comprises 183 residues: Triggering receptor expressed on myeloid cells 3 (183 aa).

The N-terminal stretch at 1–19 is a signal peptide; sequence MSPLLLWLGLMLCVSGLQA. The Extracellular segment spans residues 20 to 138; sequence GDEEEHKCFL…AWCQGKPVMV (119 aa). In terms of domain architecture, Ig-like V-type spans 30-128; it reads EGENLTLTCP…VIILRQRIRL (99 aa). Asparagine 33 carries an N-linked (GlcNAc...) asparagine glycan. A disulfide bridge connects residues cysteine 38 and cysteine 110. A helical membrane pass occupies residues 139–159; that stretch reads IVLTCGFILNKGLVFSVLFVF. The Cytoplasmic portion of the chain corresponds to 160–183; sequence LCKAGPKVLQPSKTSKVQGVSEKQ.

Interacts with TYROBP/DAP12. In terms of tissue distribution, expressed in macrophages and in T-cells.

It is found in the cell membrane. Forms a receptor signaling complex with TYROBP/DAP12 which mediates activation of macrophages as part of the innate immune response. The sequence is that of Triggering receptor expressed on myeloid cells 3 from Mus musculus (Mouse).